The sequence spans 206 residues: Recombination protein RecR (206 aa).

A C4-type zinc finger spans residues 58-73; that stretch reads CENCHNISDTKVCEIC. In terms of domain architecture, Toprim spans 81-176; it reads QTICVVEDIR…IISTIARGIS (96 aa).

Belongs to the RecR family.

Its function is as follows. May play a role in DNA repair. It seems to be involved in an RecBC-independent recombinational process of DNA repair. It may act with RecF and RecO. In Flavobacterium johnsoniae (strain ATCC 17061 / DSM 2064 / JCM 8514 / BCRC 14874 / CCUG 350202 / NBRC 14942 / NCIMB 11054 / UW101) (Cytophaga johnsonae), this protein is Recombination protein RecR.